A 214-amino-acid polypeptide reads, in one-letter code: Calcineurin B homologous protein 3 (214 aa).

Residues 1 to 20 (MGAAHSASEEVRELEGKTGF) are disordered. A lipid anchor (N-myristoyl glycine) is attached at glycine 2. Residues 7–16 (ASEEVRELEG) show a composition bias toward basic and acidic residues. The region spanning 110-145 (SRKEKLRFLFHMYDSDSDGRITLEEYRNVVEELLSG) is the EF-hand domain. Ca(2+)-binding residues include aspartate 123, aspartate 125, aspartate 127, arginine 129, and glutamate 134.

Belongs to the calcineurin regulatory subunit family. CHP subfamily. Monomer. Homodimer; disulfide-linked. Interacts with SLC9A1/NHE1; the interaction enables an optimal Na(+)/H(+) exchange activity. Expressed in mature megakaryocytes and polymorphonuclear granulocytes (at protein level). Abundantly expressed in heart. Also expressed at a lower level in adult testis and salivary gland, and in the placenta.

Its subcellular location is the nucleus. It is found in the cytoplasm. The protein localises to the membrane. The protein resides in the cell membrane. It localises to the cell projection. Its subcellular location is the lamellipodium. It is found in the ruffle membrane. Its function is as follows. Functions as an integral cofactor in cell pH regulation by controlling plasma membrane-type Na(+)/H(+) exchange activity. Promotes the maturation, transport, cell surface stability and exchange activity of SLC9A1/NHE1 at the plasma membrane. Promotes the induction of hematopoietic stem cell differentiation toward megakaryocytic lineage. Essential for the coupling of ERK cascade activation with the expression of ETS family genes in megakaryocytic differentiation. Also involved in granulocytic differentiation in a ERK-dependent manner. Inhibits the phosphatase activity of calcineurin. This is Calcineurin B homologous protein 3 (TESC) from Homo sapiens (Human).